Reading from the N-terminus, the 415-residue chain is MGSLGAILKHPEDFYPLLKLKIAARHAEKQIPSEPHWAFCYSMLHKVSRSFGLVIQQLGPQLRDAVCIFYLVLRALDTVEDDTSISTEVKVPILMAFHRHIYDNDWHFSCGTKEYKVLMDEFHHVSNAFLDLGSGYKEAIEDITMRMGAGMAKFICKEVETIDDYDEYCHYVAGLVGLGLSKLFHASGAEDLATDSLSNSMGLFLQKTNIIRDYLEDINEIPKSRMFWPRQIWSKYVDKLEDLKYEENSAKAVQCLNDMVTDALVHAEDCLKYMSDLRGPAIFRFCAIPQIMAIGTLALCFNNTQVFRGVVKMRRGLTAKVIDQTKTMSDVYGAFFDFSCLLKSKVDNNDPNATKTLSRLEAIQKICKNSGALTTKRKSYIIENESGYNSTLIVILFIILAILYAYLSSNLPNSL.

The next 2 helical transmembrane spans lie at 281 to 301 and 392 to 412; these read AIFRFCAIPQIMAIGTLALCF and LIVILFIILAILYAYLSSNLP.

It belongs to the phytoene/squalene synthase family. Mg(2+) serves as cofactor. Mn(2+) is required as a cofactor.

The protein localises to the endoplasmic reticulum membrane. The catalysed reaction is 2 (2E,6E)-farnesyl diphosphate + NADH + H(+) = squalene + 2 diphosphate + NAD(+). The enzyme catalyses 2 (2E,6E)-farnesyl diphosphate + NADPH + H(+) = squalene + 2 diphosphate + NADP(+). Its pathway is terpene metabolism; lanosterol biosynthesis; lanosterol from farnesyl diphosphate: step 1/3. In terms of biological role, component of the triterpene saponins (e.g. ginsenosides or panaxosides) and phytosterols biosynthetic pathways. Catalyzes the biosynthesis of squalene. This Panax ginseng (Korean ginseng) protein is Squalene synthase 10.